Reading from the N-terminus, the 148-residue chain is Putative nickel-responsive regulator (148 aa).

Ni(2+)-binding residues include histidine 76, histidine 87, histidine 89, and cysteine 95.

The protein belongs to the transcriptional regulatory CopG/NikR family. Requires Ni(2+) as cofactor.

In terms of biological role, transcriptional regulator. In Rhodopseudomonas palustris (strain ATCC BAA-98 / CGA009), this protein is Putative nickel-responsive regulator.